The primary structure comprises 320 residues: ATP-dependent 6-phosphofructokinase (320 aa).

Residue G12 participates in ATP binding. ADP contacts are provided by residues 22-26 (RSVVR) and 55-60 (RYSVSD). ATP-binding positions include 73–74 (RF) and 103–106 (GDGS). D104 is a Mg(2+) binding site. 126–128 (TID) contacts substrate. The active-site Proton acceptor is D128. R155 is an ADP binding site. Residues R163 and 170–172 (MGR) contribute to the substrate site. Residues 186-188 (GCE) and 214-216 (KKH) contribute to the ADP site. Residues E223, R244, and 250-253 (HIQR) each bind substrate.

This sequence belongs to the phosphofructokinase type A (PFKA) family. ATP-dependent PFK group I subfamily. Prokaryotic clade 'B1' sub-subfamily. In terms of assembly, homotetramer. Mg(2+) is required as a cofactor.

It localises to the cytoplasm. The catalysed reaction is beta-D-fructose 6-phosphate + ATP = beta-D-fructose 1,6-bisphosphate + ADP + H(+). The protein operates within carbohydrate degradation; glycolysis; D-glyceraldehyde 3-phosphate and glycerone phosphate from D-glucose: step 3/4. With respect to regulation, allosterically activated by ADP and other diphosphonucleosides, and allosterically inhibited by phosphoenolpyruvate. In terms of biological role, catalyzes the phosphorylation of D-fructose 6-phosphate to fructose 1,6-bisphosphate by ATP, the first committing step of glycolysis. In Baumannia cicadellinicola subsp. Homalodisca coagulata, this protein is ATP-dependent 6-phosphofructokinase.